Consider the following 382-residue polypeptide: S-adenosylmethionine synthase (382 aa).

Residue His16 participates in ATP binding. Asp18 is a Mg(2+) binding site. Glu44 provides a ligand contact to K(+). Residues Glu57 and Gln100 each coordinate L-methionine. The segment at Gln100–Glu110 is flexible loop. ATP is bound by residues Asp165–Lys167, Asp240, Arg246–Lys247, Ala263, and Lys267. Asp240 contacts L-methionine. Lys271 contacts L-methionine.

The protein belongs to the AdoMet synthase family. Homotetramer; dimer of dimers. It depends on Mg(2+) as a cofactor. K(+) is required as a cofactor.

It localises to the cytoplasm. The enzyme catalyses L-methionine + ATP + H2O = S-adenosyl-L-methionine + phosphate + diphosphate. Its pathway is amino-acid biosynthesis; S-adenosyl-L-methionine biosynthesis; S-adenosyl-L-methionine from L-methionine: step 1/1. Catalyzes the formation of S-adenosylmethionine (AdoMet) from methionine and ATP. The overall synthetic reaction is composed of two sequential steps, AdoMet formation and the subsequent tripolyphosphate hydrolysis which occurs prior to release of AdoMet from the enzyme. The chain is S-adenosylmethionine synthase from Alcanivorax borkumensis (strain ATCC 700651 / DSM 11573 / NCIMB 13689 / SK2).